We begin with the raw amino-acid sequence, 359 residues long: F-box/kelch-repeat protein At1g15670 (359 aa).

The 48-residue stretch at 2–49 (ELIPDLPETVAYECLLRSSYKQFPLMASVCKLWQREISLSDFFRHRKA) folds into the F-box domain. Kelch repeat units follow at residues 119 to 167 (DLVV…ASDS), 170 to 217 (NVFV…FHAG), 219 to 269 (FHVI…CAAG), 271 to 310 (NGDL…AIRR), and 313 to 358 (NLVV…CFLE).

This Arabidopsis thaliana (Mouse-ear cress) protein is F-box/kelch-repeat protein At1g15670.